The following is a 59-amino-acid chain: Large ribosomal subunit protein uL30 (59 aa).

It belongs to the universal ribosomal protein uL30 family. Part of the 50S ribosomal subunit.

The chain is Large ribosomal subunit protein uL30 from Erwinia tasmaniensis (strain DSM 17950 / CFBP 7177 / CIP 109463 / NCPPB 4357 / Et1/99).